A 458-amino-acid polypeptide reads, in one-letter code: Chromosomal replication initiator protein DnaA (458 aa).

Residues 1 to 79 (MSLAIWQECL…ENPNHSVKIR (79 aa)) are domain I, interacts with DnaA modulators. The tract at residues 79–120 (RLMVGNVSSVEKKPAKQIPTQAPLTNQPWEGESKAHRVPHKS) is domain II. The disordered stretch occupies residues 92 to 114 (PAKQIPTQAPLTNQPWEGESKAH). The span at 96–106 (IPTQAPLTNQP) shows a compositional bias: polar residues. Residues 121 to 338 (NLIKKYTFDN…GAIANISAKA (218 aa)) are domain III, AAA+ region. Gly165, Gly167, Lys168, and Thr169 together coordinate ATP. A domain IV, binds dsDNA region spans residues 339–458 (QFTGQGITIS…YKILIRTLSM (120 aa)).

This sequence belongs to the DnaA family. As to quaternary structure, oligomerizes as a right-handed, spiral filament on DNA at oriC.

The protein localises to the cytoplasm. Plays an essential role in the initiation and regulation of chromosomal replication. ATP-DnaA binds to the origin of replication (oriC) to initiate formation of the DNA replication initiation complex once per cell cycle. Binds the DnaA box (a 9 base pair repeat at the origin) and separates the double-stranded (ds)DNA. Forms a right-handed helical filament on oriC DNA; dsDNA binds to the exterior of the filament while single-stranded (ss)DNA is stabiized in the filament's interior. The ATP-DnaA-oriC complex binds and stabilizes one strand of the AT-rich DNA unwinding element (DUE), permitting loading of DNA polymerase. After initiation quickly degrades to an ADP-DnaA complex that is not apt for DNA replication. Binds acidic phospholipids. In Psychromonas ingrahamii (strain DSM 17664 / CCUG 51855 / 37), this protein is Chromosomal replication initiator protein DnaA.